An 84-amino-acid polypeptide reads, in one-letter code: NADH-ubiquinone oxidoreductase chain 4L (84 aa).

2 helical membrane-spanning segments follow: residues 19–39 and 50–70; these read ITLL…LIHI and IFSL…LSIL.

It belongs to the complex I subunit 4L family.

Its subcellular location is the mitochondrion membrane. It catalyses the reaction a ubiquinone + NADH + 5 H(+)(in) = a ubiquinol + NAD(+) + 4 H(+)(out). Core subunit of the mitochondrial membrane respiratory chain NADH dehydrogenase (Complex I) that is believed to belong to the minimal assembly required for catalysis. Complex I functions in the transfer of electrons from NADH to the respiratory chain. The immediate electron acceptor for the enzyme is believed to be ubiquinone. This Candida albicans (strain SC5314 / ATCC MYA-2876) (Yeast) protein is NADH-ubiquinone oxidoreductase chain 4L (NAD4L).